Here is a 202-residue protein sequence, read N- to C-terminus: Protein EMBRYO DEFECTIVE 514 (202 aa).

Disordered stretches follow at residues 1-69 (MAEE…PVKL) and 168-202 (MKTPGANGNGHGGGRGGGGGRRGGRGGGRGGRFRR). N-acetylalanine is present on alanine 2. Basic and acidic residues-rich tracts occupy residues 33–42 (ETGDEKRERE) and 51–65 (GESKKQKVGEEEKSG). The segment covering 174 to 202 (NGNGHGGGRGGGGGRRGGRGGGRGGRFRR) has biased composition (gly residues).

In terms of tissue distribution, expressed in leaves, flowers and embryos at globular stage.

It is found in the nucleus. Functionally, may play a role in ribosome biogenesis and in determining the rate of cell division. Involved in a process essential for nuclear and nucleolar functions. In Arabidopsis thaliana (Mouse-ear cress), this protein is Protein EMBRYO DEFECTIVE 514.